The sequence spans 333 residues: Ketol-acid reductoisomerase (NADP(+)) (333 aa).

The region spanning 6–186 (TRVYTECDAD…GALRAGAIQT (181 aa)) is the KARI N-terminal Rossmann domain. Residues 29 to 32 (YGSQ), Lys-52, Ser-55, Ser-57, and 87 to 90 (DPAQ) contribute to the NADP(+) site. His-112 is an active-site residue. Residue Gly-138 participates in NADP(+) binding. Residues 187 to 332 (TFTEETETDL…ARLRALFSWS (146 aa)) enclose the KARI C-terminal knotted domain. Positions 195, 199, 231, and 235 each coordinate Mg(2+). Ser-256 contacts substrate.

It belongs to the ketol-acid reductoisomerase family. It depends on Mg(2+) as a cofactor.

It catalyses the reaction (2R)-2,3-dihydroxy-3-methylbutanoate + NADP(+) = (2S)-2-acetolactate + NADPH + H(+). It carries out the reaction (2R,3R)-2,3-dihydroxy-3-methylpentanoate + NADP(+) = (S)-2-ethyl-2-hydroxy-3-oxobutanoate + NADPH + H(+). Its pathway is amino-acid biosynthesis; L-isoleucine biosynthesis; L-isoleucine from 2-oxobutanoate: step 2/4. The protein operates within amino-acid biosynthesis; L-valine biosynthesis; L-valine from pyruvate: step 2/4. Its function is as follows. Involved in the biosynthesis of branched-chain amino acids (BCAA). Catalyzes an alkyl-migration followed by a ketol-acid reduction of (S)-2-acetolactate (S2AL) to yield (R)-2,3-dihydroxy-isovalerate. In the isomerase reaction, S2AL is rearranged via a Mg-dependent methyl migration to produce 3-hydroxy-3-methyl-2-ketobutyrate (HMKB). In the reductase reaction, this 2-ketoacid undergoes a metal-dependent reduction by NADPH to yield (R)-2,3-dihydroxy-isovalerate. This chain is Ketol-acid reductoisomerase (NADP(+)), found in Tropheryma whipplei (strain Twist) (Whipple's bacillus).